Here is a 178-residue protein sequence, read N- to C-terminus: Inner membrane-spanning protein YciB (178 aa).

A run of 6 helical transmembrane segments spans residues 1–21 (MKILFDFLPIVIFFVVYKMTG), 23–43 (IIIATAILIPATIIQVGFTWF), 51–71 (MHLVSLALVVLLGGATVLLGD), 77–97 (WKPTIVNGLFAIAFLGSQFIG), 120–140 (LNLAWVGFFIVSGVTNLYVAF), and 150–170 (FKLFGLLGMTIVFIILQGIYL).

The protein belongs to the YciB family.

It is found in the cell inner membrane. Functionally, plays a role in cell envelope biogenesis, maintenance of cell envelope integrity and membrane homeostasis. The chain is Inner membrane-spanning protein YciB from Marinomonas sp. (strain MWYL1).